Here is an 88-residue protein sequence, read N- to C-terminus: Small ribosomal subunit protein bS20 (88 aa).

Residues 1–27 (MANTASAKKMTRKIAKRTAINRSRRSR) are disordered.

Belongs to the bacterial ribosomal protein bS20 family.

In terms of biological role, binds directly to 16S ribosomal RNA. The chain is Small ribosomal subunit protein bS20 from Methylobacterium radiotolerans (strain ATCC 27329 / DSM 1819 / JCM 2831 / NBRC 15690 / NCIMB 10815 / 0-1).